Reading from the N-terminus, the 207-residue chain is Zinc finger protein 487 (207 aa).

The KRAB domain occupies 1–43 (MLENYSLLLSVGYCITKPEVVCKLEHGQVLWILEEESPSQSHL). Residues 177–202 (KQCFEYNQCGKAFHEEAACSTHKRVC) form a C2H2-type; atypical zinc finger.

It belongs to the krueppel C2H2-type zinc-finger protein family.

It is found in the nucleus. In terms of biological role, may be involved in transcriptional regulation. This chain is Zinc finger protein 487 (ZNF487), found in Homo sapiens (Human).